Consider the following 155-residue polypeptide: 6,7-dimethyl-8-ribityllumazine synthase (155 aa).

5-amino-6-(D-ribitylamino)uracil contacts are provided by residues Phe-24, 58–60, and 82–84; these read AFE and VLI. A (2S)-2-hydroxy-3-oxobutyl phosphate-binding site is contributed by 87 to 88; that stretch reads AT. His-90 acts as the Proton donor in catalysis. Residue Phe-115 coordinates 5-amino-6-(D-ribitylamino)uracil. Arg-129 serves as a coordination point for (2S)-2-hydroxy-3-oxobutyl phosphate.

Belongs to the DMRL synthase family.

It carries out the reaction (2S)-2-hydroxy-3-oxobutyl phosphate + 5-amino-6-(D-ribitylamino)uracil = 6,7-dimethyl-8-(1-D-ribityl)lumazine + phosphate + 2 H2O + H(+). It functions in the pathway cofactor biosynthesis; riboflavin biosynthesis; riboflavin from 2-hydroxy-3-oxobutyl phosphate and 5-amino-6-(D-ribitylamino)uracil: step 1/2. Catalyzes the formation of 6,7-dimethyl-8-ribityllumazine by condensation of 5-amino-6-(D-ribitylamino)uracil with 3,4-dihydroxy-2-butanone 4-phosphate. This is the penultimate step in the biosynthesis of riboflavin. In Chloroherpeton thalassium (strain ATCC 35110 / GB-78), this protein is 6,7-dimethyl-8-ribityllumazine synthase.